A 615-amino-acid chain; its full sequence is Elongation factor 4 (615 aa).

The region spanning 14–196 (AMIRNFCIIA…EIVRQVPAPV (183 aa)) is the tr-type G domain. Residues 26 to 31 (DHGKST) and 143 to 146 (NKID) contribute to the GTP site.

It belongs to the TRAFAC class translation factor GTPase superfamily. Classic translation factor GTPase family. LepA subfamily.

The protein resides in the cell membrane. It carries out the reaction GTP + H2O = GDP + phosphate + H(+). Required for accurate and efficient protein synthesis under certain stress conditions. May act as a fidelity factor of the translation reaction, by catalyzing a one-codon backward translocation of tRNAs on improperly translocated ribosomes. Back-translocation proceeds from a post-translocation (POST) complex to a pre-translocation (PRE) complex, thus giving elongation factor G a second chance to translocate the tRNAs correctly. Binds to ribosomes in a GTP-dependent manner. The sequence is that of Elongation factor 4 from Frankia alni (strain DSM 45986 / CECT 9034 / ACN14a).